A 467-amino-acid polypeptide reads, in one-letter code: UDP-N-acetylmuramoylalanine--D-glutamate ligase (467 aa).

118 to 124 (GTNGKTT) is a binding site for ATP.

This sequence belongs to the MurCDEF family.

It is found in the cytoplasm. It carries out the reaction UDP-N-acetyl-alpha-D-muramoyl-L-alanine + D-glutamate + ATP = UDP-N-acetyl-alpha-D-muramoyl-L-alanyl-D-glutamate + ADP + phosphate + H(+). Its pathway is cell wall biogenesis; peptidoglycan biosynthesis. Its function is as follows. Cell wall formation. Catalyzes the addition of glutamate to the nucleotide precursor UDP-N-acetylmuramoyl-L-alanine (UMA). The chain is UDP-N-acetylmuramoylalanine--D-glutamate ligase from Streptomyces avermitilis (strain ATCC 31267 / DSM 46492 / JCM 5070 / NBRC 14893 / NCIMB 12804 / NRRL 8165 / MA-4680).